The following is a 154-amino-acid chain: Large ribosomal subunit protein uL13 (154 aa).

This sequence belongs to the universal ribosomal protein uL13 family. Part of the 50S ribosomal subunit.

In terms of biological role, this protein is one of the early assembly proteins of the 50S ribosomal subunit, although it is not seen to bind rRNA by itself. It is important during the early stages of 50S assembly. In Cereibacter sphaeroides (strain ATCC 17029 / ATH 2.4.9) (Rhodobacter sphaeroides), this protein is Large ribosomal subunit protein uL13.